A 1053-amino-acid chain; its full sequence is Protein CLEC16A (1053 aa).

The FPL domain occupies 51–198 (IRSITEILIW…AVRTITLNVY (148 aa)). Disordered stretches follow at residues 375–434 (SLEM…GESE), 452–471 (STSV…AATC), and 892–983 (SSPS…SPSL). A compositionally biased stretch (basic residues) spans 381–392 (HKGKRRVQKRPN). A compositionally biased stretch (low complexity) spans 892–938 (SSPSLSSQSPPSASGSPSGSGSTSHCDSGGTSSSSTPSTAQSPADAP).

The protein belongs to the CLEC16A/gop-1 family. As to quaternary structure, interacts with RNF41/NRDP1. Almost exclusively expressed in immune cells, including dendritic cells, B-lymphocytes and natural killer cells.

The protein resides in the endosome membrane. It localises to the lysosome membrane. Functionally, regulator of mitophagy through the upstream regulation of the RNF41/NRDP1-PRKN pathway. Mitophagy is a selective form of autophagy necessary for mitochondrial quality control. The RNF41/NRDP1-PRKN pathway regulates autophagosome-lysosome fusion during late mitophagy. May protect RNF41/NRDP1 from proteasomal degradation, RNF41/NRDP1 which regulates proteasomal degradation of PRKN. Plays a key role in beta cells functions by regulating mitophagy/autophagy and mitochondrial health. This is Protein CLEC16A from Homo sapiens (Human).